We begin with the raw amino-acid sequence, 568 residues long: Glucose-6-phosphate isomerase, cytosolic 1 (568 aa).

Glu-360 serves as the catalytic Proton donor. Catalysis depends on residues His-391 and Lys-516.

The protein belongs to the GPI family. Homodimer.

The protein localises to the cytoplasm. It catalyses the reaction alpha-D-glucose 6-phosphate = beta-D-fructose 6-phosphate. Its pathway is carbohydrate degradation; glycolysis; D-glyceraldehyde 3-phosphate and glycerone phosphate from D-glucose: step 2/4. This chain is Glucose-6-phosphate isomerase, cytosolic 1 (PGIC1), found in Clarkia xantiana (Gunsight clarkia).